Here is a 286-residue protein sequence, read N- to C-terminus: Polyamine aminopropyltransferase (286 aa).

One can recognise a PABS domain in the interval T5–D238. Q33 provides a ligand contact to S-methyl-5'-thioadenosine. Residues H64 and D88 each contribute to the spermidine site. S-methyl-5'-thioadenosine-binding positions include E108 and D140 to G141. D158 (proton acceptor) is an active-site residue. D158–D161 is a spermidine binding site. P165 lines the S-methyl-5'-thioadenosine pocket.

This sequence belongs to the spermidine/spermine synthase family. In terms of assembly, homodimer or homotetramer.

The protein localises to the cytoplasm. It catalyses the reaction S-adenosyl 3-(methylsulfanyl)propylamine + putrescine = S-methyl-5'-thioadenosine + spermidine + H(+). It participates in amine and polyamine biosynthesis; spermidine biosynthesis; spermidine from putrescine: step 1/1. In terms of biological role, catalyzes the irreversible transfer of a propylamine group from the amino donor S-adenosylmethioninamine (decarboxy-AdoMet) to putrescine (1,4-diaminobutane) to yield spermidine. This Salmonella typhi protein is Polyamine aminopropyltransferase.